Consider the following 115-residue polypeptide: Putative UPF0377 protein YHL045W (115 aa).

Residues Ala10–Val30 form a helical membrane-spanning segment.

It belongs to the UPF0377 family.

It localises to the membrane. The sequence is that of Putative UPF0377 protein YHL045W from Saccharomyces cerevisiae (strain ATCC 204508 / S288c) (Baker's yeast).